Consider the following 397-residue polypeptide: 2,3,4,5-tetrahydropyridine-2,6-dicarboxylate N-succinyltransferase (397 aa).

Residue glutamate 265 is the Acyl-anhydride intermediate of the active site. Residues arginine 267, glycine 282, serine 285, alanine 308, 323 to 324 (DA), glycine 331, lysine 360, and 373 to 376 (RQNS) each bind succinyl-CoA.

The protein belongs to the type 2 tetrahydrodipicolinate N-succinyltransferase family. In terms of assembly, homotrimer.

Its subcellular location is the cytoplasm. It catalyses the reaction (S)-2,3,4,5-tetrahydrodipicolinate + succinyl-CoA + H2O = (S)-2-succinylamino-6-oxoheptanedioate + CoA. The protein operates within amino-acid biosynthesis; L-lysine biosynthesis via DAP pathway; LL-2,6-diaminopimelate from (S)-tetrahydrodipicolinate (succinylase route): step 1/3. In terms of biological role, catalyzes the conversion of the cyclic tetrahydrodipicolinate (THDP) into the acyclic N-succinyl-L-2-amino-6-oxopimelate using succinyl-CoA. The chain is 2,3,4,5-tetrahydropyridine-2,6-dicarboxylate N-succinyltransferase from Sulfurovum sp. (strain NBC37-1).